We begin with the raw amino-acid sequence, 295 residues long: Golgi-associated RAB2 interactor protein 1A (295 aa).

The interval 187 to 206 is disordered; it reads MPNSSTETTPESSRPASSQS. The span at 190-206 shows a compositional bias: low complexity; the sequence is SSTETTPESSRPASSQS. Phosphoserine occurs at positions 220, 221, 251, and 255.

Belongs to the GARIN family. In terms of assembly, interacts (via N-terminus) with RAB2B (in GTP-bound form).

The protein localises to the golgi apparatus. RAB2B effector protein required for accurate acrosome formation and normal male fertility. The sequence is that of Golgi-associated RAB2 interactor protein 1A (Garin1a) from Rattus norvegicus (Rat).